Consider the following 511-residue polypeptide: Probable pectinesterase/pectinesterase inhibitor 17 (511 aa).

Positions 1–23 are cleaved as a signal peptide; the sequence is MMAFRAYIINFVILCILVASTVS. The pectinesterase inhibitor 17 stretch occupies residues 24–171; that stretch reads GYNQKDVKAW…SNLLCNTLAI (148 aa). N-linked (GlcNAc...) asparagine glycans are attached at residues N112 and N160. Residues 237–414 are pectinesterase 17; the sequence is VKQGVYSENL…LRPVLGSTKT (178 aa). T277 and Q307 together coordinate substrate. Catalysis depends on D330, which acts as the Proton donor; for pectinesterase activity. C344 and C364 are joined by a disulfide. D351 acts as the Nucleophile; for pectinesterase activity in catalysis. Residues R418 and W420 each contribute to the substrate site.

It in the N-terminal section; belongs to the PMEI family. This sequence in the C-terminal section; belongs to the pectinesterase family. Expressed in siliques.

Its subcellular location is the secreted. It is found in the cell wall. It catalyses the reaction [(1-&gt;4)-alpha-D-galacturonosyl methyl ester](n) + n H2O = [(1-&gt;4)-alpha-D-galacturonosyl](n) + n methanol + n H(+). Its pathway is glycan metabolism; pectin degradation; 2-dehydro-3-deoxy-D-gluconate from pectin: step 1/5. Functionally, acts in the modification of cell walls via demethylesterification of cell wall pectin. The protein is Probable pectinesterase/pectinesterase inhibitor 17 (PME17) of Arabidopsis thaliana (Mouse-ear cress).